The primary structure comprises 79 residues: RNA-binding protein Hfq (79 aa).

Positions 10 to 70 (DVFLNTVRKQ…ISTIMPGQPV (61 aa)) constitute a Sm domain.

Belongs to the Hfq family. Homohexamer.

Its function is as follows. RNA chaperone that binds small regulatory RNA (sRNAs) and mRNAs to facilitate mRNA translational regulation in response to envelope stress, environmental stress and changes in metabolite concentrations. Also binds with high specificity to tRNAs. The polypeptide is RNA-binding protein Hfq (Bartonella henselae (strain ATCC 49882 / DSM 28221 / CCUG 30454 / Houston 1) (Rochalimaea henselae)).